The primary structure comprises 537 residues: Eukaryotic translation initiation factor 3 subunit L (537 aa).

The region spanning 301–513 is the PCI domain; sequence TFSSILLYIQ…IHIADTKVSH (213 aa).

Belongs to the eIF-3 subunit L family. Component of the eukaryotic translation initiation factor 3 (eIF-3) complex.

The protein resides in the cytoplasm. Component of the eukaryotic translation initiation factor 3 (eIF-3) complex, which is involved in protein synthesis of a specialized repertoire of mRNAs and, together with other initiation factors, stimulates binding of mRNA and methionyl-tRNAi to the 40S ribosome. The eIF-3 complex specifically targets and initiates translation of a subset of mRNAs involved in cell proliferation. The polypeptide is Eukaryotic translation initiation factor 3 subunit L (Aedes aegypti (Yellowfever mosquito)).